Reading from the N-terminus, the 641-residue chain is Homeobox protein ceh-38 (641 aa).

Polar residues-rich tracts occupy residues 1 to 14 (MESSRTAATSTNGT) and 28 to 38 (DPSSTFINNTG). 2 disordered regions span residues 1-79 (MESS…TSSA) and 129-244 (LHVD…GDRM). Low complexity predominate over residues 52–79 (TISPHPITPSASTSSATSATEEPATSSA). Positions 131–140 (VDSRRRESHD) are enriched in basic and acidic residues. 2 stretches are compositionally biased toward polar residues: residues 167–183 (TPTNDRSTDLGSISSLL) and 190–204 (NTIGQSPSPRSTFGS). Positions 308–394 (NAEIGDDIYI…TRLAILDMKT (87 aa)) form a DNA-binding region, CUT. 3 disordered regions span residues 398-428 (NRASGMSPPTPAQNVRTHRRSTSDHDGPVSK), 485-508 (GGNIDEPTPFQQVKNISPPPVGDT), and 552-641 (FGVS…LAAN). The homeobox DNA-binding region spans 427-486 (SKRPRLVFTDIQKRTLQAIFKETQRPSREMQQTIAEHLRLDLSTVANFFMNARRRSRLGG). The span at 571 to 604 (HEDDEELDELNDSELAYEEDVEIGDEEEEDEEQA) shows a compositional bias: acidic residues. Residues 613 to 626 (KVEELEEKTVIKEE) are compositionally biased toward basic and acidic residues.

Belongs to the CUT homeobox family. In terms of tissue distribution, expressed in the embryo. After gastrulation, expressed in almost all cells. During larval and adult stages, expressed in the dorsal and ventral nerve cord, head and tail neurons, pharynx, gut and head.

It is found in the nucleus. In terms of biological role, probable DNA-binding regulatory protein involved in cell-fate specification. The sequence is that of Homeobox protein ceh-38 (ceh-38) from Caenorhabditis elegans.